Reading from the N-terminus, the 1644-residue chain is Terminal uridylyltransferase 4 (1644 aa).

Disordered regions lie at residues 30–60 and 75–277; these read SNQTLKPRNDKSEIGTSSLNRNSSKKTKQND and AASV…EMDY. Ser102 is subject to Phosphoserine. Residues 108–123 show a composition bias toward polar residues; the sequence is KGSSQTKLEKTPSLQT. Residue Ser131 is modified to Phosphoserine. Polar residues-rich tracts occupy residues 146-156 and 163-174; these read AEATTEKALNS and TPTSQMKLQKTP. Ser176 bears the Phosphoserine mark. 2 stretches are compositionally biased toward polar residues: residues 194-209 and 226-242; these read QTESQQTGKKLTSSFV and LENSSLSQKQQTQTDNI. The span at 258–272 shows a compositional bias: basic and acidic residues; that stretch reads DLSKMKSEESNKENS. The required for interaction with LIN28A and pre-let-7 RNA stretch occupies residues 273–353; sequence SEMDYLENAT…KEKRHKKNIL (81 aa). Zn(2+) is bound by residues Cys326, Cys329, His342, and His348. The segment covering 603 to 623 has biased composition (basic and acidic residues); it reads IADENKAKADEPKDDTKKTET. A disordered region spans residues 603–640; the sequence is IADENKAKADEPKDDTKKTETDNQSNAAKAKHGKSPLT. In terms of domain architecture, PAP-associated 1 spans 649–698; that stretch reads LGQLWLELLKFYTLDFALEEYVICVRIQDILTRENKNWPKRRIAIEDPFS. Disordered regions lie at residues 733–759 and 812–841; these read KGGNKSTMDPKKKEKGKLSSKKPVKSD and HGQDSSSLSTASGGSDLKQKSAEKQGDLTP. Over residues 745 to 755 the composition is skewed to basic residues; the sequence is KEKGKLSSKKP. Residues 815–827 are compositionally biased toward low complexity; it reads DSSSLSTASGGSD. A compositionally biased stretch (basic and acidic residues) spans 828 to 837; it reads LKQKSAEKQG. The segment at 918 to 1634 is sufficient for monouridylation activity; the sequence is DKFILTSGKP…CATRRCRERC (717 aa). Residues 930-947 form a CCHC-type 1 zinc finger; sequence IVCSICKKDGHSKNDCPE. Residues 1015-1018, 1025-1028, Asn1098, Lys1120, 1138-1142, and His1254 each bind UTP; these read SSKN, SDLD, and SYAYI. Asp1026 and Asp1028 together coordinate Mg(2+). In terms of domain architecture, PAP-associated 2 spans 1201-1254; the sequence is SLGELWLGLLRFYTEEFDFKEYVISIRQKKLLTTFEKQWTSKCIAIEDPFDLNH. Residues 1310–1327 form a CCHC-type 2 zinc finger; that stretch reads RCCRVCGKIGHYMKDCPK. Residues 1329–1350 are disordered; sequence KRLKKKDSEEEKEGNEEEKDSR. The segment at 1358–1375 adopts a CCHC-type 3 zinc-finger fold; the sequence is LRCFICGDAGHVRRECPE. Positions 1402 to 1427 are enriched in low complexity; sequence AGSAQQQSDQSIRTRQSSECSDSPSY. Residues 1402 to 1483 form a disordered region; that stretch reads AGSAQQQSDQ…LYNFPQSPPA (82 aa). The span at 1428–1450 shows a compositional bias: pro residues; sequence SPQPQPFPQNSPQPSALPPPPSQ. The segment covering 1451 to 1473 has biased composition (low complexity); that stretch reads PGSQPKLGPPQQGGQPPHQVQMP. Arg1624 carries the post-translational modification Omega-N-methylarginine.

Belongs to the DNA polymerase type-B-like family. In terms of assembly, interacts with LIN28A in the presence of pre-let-7 RNA. Interacts with T2BP. Interacts with MOV10; the interaction is RNA-dependent. The cofactor is Mg(2+). Mn(2+) serves as cofactor. Ubiquitously expressed.

The protein localises to the nucleus. Its subcellular location is the cytoplasm. It is found in the cytoplasmic ribonucleoprotein granule. The catalysed reaction is RNA(n) + UTP = RNA(n)-3'-uridine ribonucleotide + diphosphate. Its function is as follows. Uridylyltransferase that mediates the terminal uridylation of mRNAs with short (less than 25 nucleotides) poly(A) tails, hence facilitating global mRNA decay. Essential for both oocyte maturation and fertility. Through 3' terminal uridylation of mRNA, sculpts, with TUT7, the maternal transcriptome by eliminating transcripts during oocyte growth. Involved in microRNA (miRNA)-induced gene silencing through uridylation of deadenylated miRNA targets. Also functions as an integral regulator of microRNA biogenesiS using 3 different uridylation mechanisms. Acts as a suppressor of miRNA biogenesis by mediating the terminal uridylation of some miRNA precursors, including that of let-7 (pre-let-7), miR107, miR-143 and miR-200c. Uridylated miRNAs are not processed by Dicer and undergo degradation. Degradation of pre-let-7 contributes to the maintenance of embryonic stem (ES) cell pluripotency. Also catalyzes the 3' uridylation of miR-26A, a miRNA that targets IL6 transcript. This abrogates the silencing of IL6 transcript, hence promoting cytokine expression. In the absence of LIN28A, TUT7 and TUT4 monouridylate group II pre-miRNAs, which includes most of pre-let7 members, that shapes an optimal 3' end overhang for efficient processing. Add oligo-U tails to truncated pre-miRNAS with a 5' overhang which may promote rapid degradation of non-functional pre-miRNA species. May also suppress Toll-like receptor-induced NF-kappa-B activation via binding to T2BP. Does not play a role in replication-dependent histone mRNA degradation. Due to functional redundancy between TUT4 and TUT7, the identification of the specific role of each of these proteins is difficult. TUT4 and TUT7 restrict retrotransposition of long interspersed element-1 (LINE-1) in cooperation with MOV10 counteracting the RNA chaperonne activity of L1RE1. TUT7 uridylates LINE-1 mRNAs in the cytoplasm which inhibits initiation of reverse transcription once in the nucleus, whereas uridylation by TUT4 destabilizes mRNAs in cytoplasmic ribonucleoprotein granules. This is Terminal uridylyltransferase 4 from Mus musculus (Mouse).